The chain runs to 286 residues: Undecaprenyl-diphosphatase (286 aa).

7 helical membrane-spanning segments follow: residues 5-25 (WFIIKAIIIGIVEGITEFLPV), 55-75 (IDAFTMIIQLGAILAIVVLYW), 92-112 (SGFKFWLNIAVSAVPAGVLGL), 122-142 (LFNPGSVTAALIVGAIWMIFA), 185-205 (IIGAWIVGLSTVAAAEFSFFL), 229-249 (MHIVGLTVGFIVSFIVALIVV), and 264-284 (FAMYRILLGIVLIILSLFNVI).

Belongs to the UppP family.

It is found in the cell membrane. It catalyses the reaction di-trans,octa-cis-undecaprenyl diphosphate + H2O = di-trans,octa-cis-undecaprenyl phosphate + phosphate + H(+). Catalyzes the dephosphorylation of undecaprenyl diphosphate (UPP). Confers resistance to bacitracin. The chain is Undecaprenyl-diphosphatase from Clostridium novyi (strain NT).